A 499-amino-acid polypeptide reads, in one-letter code: Glycerol kinase (499 aa).

Thr13 is an ADP binding site. The ATP site is built by Thr13, Thr14, and Ser15. Thr13 is a binding site for sn-glycerol 3-phosphate. Arg17 serves as a coordination point for ADP. Sn-glycerol 3-phosphate is bound by residues Arg83, Glu84, Tyr135, and Asp244. Arg83, Glu84, Tyr135, Asp244, and Gln245 together coordinate glycerol. Residues Thr266 and Gly309 each coordinate ADP. ATP is bound by residues Thr266, Gly309, Gln313, and Gly410. Residues Gly410 and Asn414 each contribute to the ADP site.

It belongs to the FGGY kinase family.

The enzyme catalyses glycerol + ATP = sn-glycerol 3-phosphate + ADP + H(+). It functions in the pathway polyol metabolism; glycerol degradation via glycerol kinase pathway; sn-glycerol 3-phosphate from glycerol: step 1/1. Inhibited by fructose 1,6-bisphosphate (FBP). Its function is as follows. Key enzyme in the regulation of glycerol uptake and metabolism. Catalyzes the phosphorylation of glycerol to yield sn-glycerol 3-phosphate. This Paraburkholderia xenovorans (strain LB400) protein is Glycerol kinase.